The sequence spans 87 residues: uncharacterized protein (87 aa).

This sequence to B.subtilis XkdR.

This is an uncharacterized protein from Bacillus subtilis (strain 168).